A 62-amino-acid chain; its full sequence is Keratin-associated protein 6-2 (62 aa).

Belongs to the KRTAP type 6 family. Interacts with hair keratins.

Functionally, in the hair cortex, hair keratin intermediate filaments are embedded in an interfilamentous matrix, consisting of hair keratin-associated proteins (KRTAP), which are essential for the formation of a rigid and resistant hair shaft through their extensive disulfide bond cross-linking with abundant cysteine residues of hair keratins. The matrix proteins include the high-sulfur and high-glycine-tyrosine keratins. The sequence is that of Keratin-associated protein 6-2 (KRTAP6-2) from Homo sapiens (Human).